A 533-amino-acid polypeptide reads, in one-letter code: Metallothionein expression activator (533 aa).

C2H2-type zinc fingers lie at residues 443–472 (YVCL…SDRP) and 473–500 (YRCD…NGRP). The segment at 501–524 (YVCECLKRFNRLDALNRHKQRNIC) adopts a C2H2-type 3; atypical zinc-finger fold.

The protein localises to the nucleus. Its function is as follows. Regulates the transcription of genes required for cell separation. The sequence is that of Metallothionein expression activator (ace2) from Schizosaccharomyces pombe (strain 972 / ATCC 24843) (Fission yeast).